The chain runs to 154 residues: Protein X (154 aa).

The segment at 68 to 117 (PCALRFTSARCMETTVNAPRNLPTVLHKRTLGLSAMSTTKIETYFKDCVF) is mitochondrial targeting sequence.

The protein belongs to the orthohepadnavirus protein X family. May form homodimer. May interact with host CEBPA, CFLAR, CREB1, DDB1, E4F1, HBXIP, HSPD1/HSP60, NFKBIA, POLR2E and SMAD4. Interacts with host SMC5-SMC6 complex and induces its degradation. Interacts with host TRPC4AP; leading to prevent ubiquitination of TRPC4AP. Interacts with host PLSCR1; this interaction promotes ubiquitination and degradation of HBx and impairs HBx-mediated cell proliferation. Post-translationally, a fraction may be phosphorylated in insect cells and HepG2 cells, a human hepatoblastoma cell line. Phosphorylated in vitro by host protein kinase C or mitogen-activated protein kinase. N-acetylated in insect cells.

It localises to the host cytoplasm. The protein localises to the host nucleus. The protein resides in the host mitochondrion. Its function is as follows. Multifunctional protein that plays a role in silencing host antiviral defenses and promoting viral transcription. Does not seem to be essential for HBV infection. May be directly involved in development of cirrhosis and liver cancer (hepatocellular carcinoma). Most of cytosolic activities involve modulation of cytosolic calcium. The effect on apoptosis is controversial depending on the cell types in which the studies have been conducted. May induce apoptosis by localizing in mitochondria and causing loss of mitochondrial membrane potential. May also modulate apoptosis by binding host CFLAR, a key regulator of the death-inducing signaling complex (DISC). Promotes viral transcription by using the host E3 ubiquitin ligase DDB1 to target the SMC5-SMC6 complex to proteasomal degradation. This host complex would otherwise bind to viral episomal DNA, and prevents its transcription. Moderately stimulates transcription of many different viral and cellular transcription elements. Promoters and enhancers stimulated by HBx contain DNA binding sites for NF-kappa-B, AP-1, AP-2, c-EBP, ATF/CREB, or the calcium-activated factor NF-AT. This chain is Protein X, found in Gorilla gorilla (western gorilla).